We begin with the raw amino-acid sequence, 249 residues long: Coproheme decarboxylase (249 aa).

Fe-coproporphyrin III-binding positions include Arg131, 145 to 149 (YPMDK), His172, and Gln185. Residue Tyr145 is part of the active site.

It belongs to the ChdC family. Type 1 subfamily. Fe-coproporphyrin III serves as cofactor.

The catalysed reaction is Fe-coproporphyrin III + 2 H2O2 + 2 H(+) = heme b + 2 CO2 + 4 H2O. The enzyme catalyses Fe-coproporphyrin III + H2O2 + H(+) = harderoheme III + CO2 + 2 H2O. It catalyses the reaction harderoheme III + H2O2 + H(+) = heme b + CO2 + 2 H2O. The protein operates within porphyrin-containing compound metabolism; protoheme biosynthesis. Its function is as follows. Involved in coproporphyrin-dependent heme b biosynthesis. Catalyzes the decarboxylation of Fe-coproporphyrin III (coproheme) to heme b (protoheme IX), the last step of the pathway. The reaction occurs in a stepwise manner with a three-propionate intermediate. This is Coproheme decarboxylase from Staphylococcus epidermidis (strain ATCC 35984 / DSM 28319 / BCRC 17069 / CCUG 31568 / BM 3577 / RP62A).